The sequence spans 740 residues: Elongation factor 2 (740 aa).

One can recognise a tr-type G domain in the interval 23 to 264 (AQIRNAGTLA…MIIEHVPPPN (242 aa)). GTP is bound by residues 32–39 (AHVDHGKT), 98–102 (DTPGH), and 152–155 (NKID). His-605 is subject to Diphthamide.

The protein belongs to the TRAFAC class translation factor GTPase superfamily. Classic translation factor GTPase family. EF-G/EF-2 subfamily.

Its subcellular location is the cytoplasm. In terms of biological role, catalyzes the GTP-dependent ribosomal translocation step during translation elongation. During this step, the ribosome changes from the pre-translocational (PRE) to the post-translocational (POST) state as the newly formed A-site-bound peptidyl-tRNA and P-site-bound deacylated tRNA move to the P and E sites, respectively. Catalyzes the coordinated movement of the two tRNA molecules, the mRNA and conformational changes in the ribosome. The polypeptide is Elongation factor 2 (Pyrobaculum neutrophilum (strain DSM 2338 / JCM 9278 / NBRC 100436 / V24Sta) (Thermoproteus neutrophilus)).